A 26-amino-acid chain; its full sequence is Small toxic protein ShoB (26 aa).

The chain crosses the membrane as a helical span at residues 7 to 24 (LIKRVIKIIIAVLQLILL).

The protein resides in the membrane. Functionally, toxic component of a type I toxin-antitoxin (TA) system. May be a toxic protein; overexpression causes cessation of growth and rapid membrane depolarization. Overexpression induces stress-response and a number of membrane protein genes. The protein is Small toxic protein ShoB (shoB) of Escherichia coli (strain K12).